The chain runs to 196 residues: ATP-dependent Clp protease proteolytic subunit (196 aa).

Serine 96 acts as the Nucleophile in catalysis. The active site involves histidine 121.

This sequence belongs to the peptidase S14 family. As to quaternary structure, fourteen ClpP subunits assemble into 2 heptameric rings which stack back to back to give a disk-like structure with a central cavity, resembling the structure of eukaryotic proteasomes.

The protein localises to the cytoplasm. The catalysed reaction is Hydrolysis of proteins to small peptides in the presence of ATP and magnesium. alpha-casein is the usual test substrate. In the absence of ATP, only oligopeptides shorter than five residues are hydrolyzed (such as succinyl-Leu-Tyr-|-NHMec, and Leu-Tyr-Leu-|-Tyr-Trp, in which cleavage of the -Tyr-|-Leu- and -Tyr-|-Trp bonds also occurs).. Cleaves peptides in various proteins in a process that requires ATP hydrolysis. Has a chymotrypsin-like activity. Plays a major role in the degradation of misfolded proteins. The sequence is that of ATP-dependent Clp protease proteolytic subunit from Streptococcus pneumoniae (strain P1031).